Consider the following 645-residue polypeptide: Putative palmitoyltransferase ZDHHC13 (645 aa).

Residues 1-73 (MDWSEGDGSH…KSSHPEDSSS (73 aa)) form a disordered region. At 1–314 (MDWSEGDGSH…ACLKLLNRYK (314 aa)) the chain is on the cytoplasmic side. Residues 7-20 (DGSHSHGHMGDSCH) are compositionally biased toward basic and acidic residues. A compositionally biased stretch (basic residues) spans 23 to 33 (GGGHSHGHGHS). Over residues 34 to 43 (HGGSGFGGFM) the composition is skewed to gly residues. 5 ANK repeats span residues 104 to 133 (ENVT…VIDQ), 138 to 167 (LNST…DPSL), 171 to 200 (EGYR…EVDL), 204 to 234 (NGQT…SVNA), and 239 to 268 (NRNS…SVDM). The chain crosses the membrane as a helical span at residues 315–335 (VCLQSVFSVVVVGAFGAILDM). Arg-336 is a topological domain (lumenal). The chain crosses the membrane as a helical span at residues 337–357 (TESWLLKGILLACIMAVINLA). The Cytoplasmic segment spans residues 358–369 (SRQLATVAVRSL). The helical transmembrane segment at 370-390 (IPSTGLIASVFWMVVTWVLWF) threads the bilayer. At 391 to 394 (LPDE) the chain is on the lumenal side. Residues 395 to 415 (PSAAVQMLFTVNITAVLYYYI) form a helical membrane-spanning segment. Topologically, residues 416-492 (RSCRTDPGHV…NGCIGARNHP (77 aa)) are cytoplasmic. Residues 449-499 (IFCTSCMMRKPMRANHCFSCNACVAKQDHHSIWINGCIGARNHPFFVLFLV) form the DHHC domain. Residues 493–513 (FFVLFLVALNFLCIWMFYGSI) form a helical membrane-spanning segment. Over 514–542 (TYWSRHCPLHYSEEGIWGALTALMGCSPW) the chain is Lumenal. The chain crosses the membrane as a helical span at residues 543-563 (LLYVFCFVFFHTTWASILLVL). Topologically, residues 564–645 (QLYQIAFLGL…RDMFSSPDAV (82 aa)) are cytoplasmic.

The protein belongs to the DHHC palmitoyltransferase family. AKR/ZDHHC17 subfamily.

The protein resides in the golgi apparatus membrane. Its subcellular location is the cytoplasmic vesicle membrane. Its function is as follows. Putative palmitoyltransferase that could catalyze the addition of palmitate onto various protein substrates. The sequence is that of Putative palmitoyltransferase ZDHHC13 from Danio rerio (Zebrafish).